Here is a 598-residue protein sequence, read N- to C-terminus: Dihydroxy-acid dehydratase astD, mitochondrial (598 aa).

The transit peptide at 1 to 111 directs the protein to the mitochondrion; it reads MFASRIRSRA…HRAGLVPMRF (111 aa). The tract at residues 23–50 is disordered; sequence RLPASTTGRRYKSDETLNRVSSKITQPK. The segment covering 40–50 has biased composition (polar residues); sequence NRVSSKITQPK. Position 86 (C86) interacts with [2Fe-2S] cluster. D118 contacts Mg(2+). C159 contributes to the [2Fe-2S] cluster binding site. D160 contacts Mg(2+). C232 is a binding site for [2Fe-2S] cluster. Mg(2+) is bound at residue E485. S511 serves as the catalytic Proton acceptor.

The protein belongs to the IlvD/Edd family. The cofactor is [2Fe-2S] cluster. Mg(2+) serves as cofactor.

It is found in the mitochondrion. The enzyme catalyses (2R)-2,3-dihydroxy-3-methylbutanoate = 3-methyl-2-oxobutanoate + H2O. The catalysed reaction is (2R,3R)-2,3-dihydroxy-3-methylpentanoate = (S)-3-methyl-2-oxopentanoate + H2O. The protein operates within amino-acid biosynthesis; L-isoleucine biosynthesis; L-isoleucine from 2-oxobutanoate: step 3/4. Its pathway is amino-acid biosynthesis; L-valine biosynthesis; L-valine from pyruvate: step 3/4. DHAD activity is not inhibited by the dihydroxyacid dehydratase inhibitor aspterric acid (AA). Dihydroxyacid dehydratase; part of the gene cluster that mediates the biosynthesis of the sesquiterpenoid aspterric acid (AA), an inhibitor of dihydroxy-acid dehydratase (DHAD) effective as an herbicide. Performs the third step in the common pathway leading to biosynthesis of branched-chain amino acids. Catalyzes the dehydration of (2R,3R)-2,3-dihydroxy-3-methylpentanoate (2,3-dihydroxy-3-methylvalerate) into 2-oxo-3-methylpentanoate (2-oxo-3-methylvalerate) and of (2R)-2,3-dihydroxy-3-methylbutanoate (2,3-dihydroxyisovalerate) into 2-oxo-3-methylbutanoate (2-oxoisovalerate), the penultimate precursor to L-isoleucine and L-valine, respectively. AstD confers self-resistance in the presence of the dihydroxyacid dehydratase inhibitor aspterric acid (AA) produced by the ast cluster. This Aspergillus terreus (strain NIH 2624 / FGSC A1156) protein is Dihydroxy-acid dehydratase astD, mitochondrial.